Consider the following 320-residue polypeptide: Dimethyladenosine transferase (320 aa).

S-adenosyl-L-methionine-binding residues include H38, L40, G65, E86, D114, and N129.

This sequence belongs to the class I-like SAM-binding methyltransferase superfamily. rRNA adenine N(6)-methyltransferase family.

It carries out the reaction adenosine(1779)/adenosine(1780) in 18S rRNA + 4 S-adenosyl-L-methionine = N(6)-dimethyladenosine(1779)/N(6)-dimethyladenosine(1780) in 18S rRNA + 4 S-adenosyl-L-homocysteine + 4 H(+). Functionally, specifically dimethylates two adjacent adenosines in the loop of a conserved hairpin near the 3'-end of 18S rRNA in the 40S particle. In Kluyveromyces lactis (strain ATCC 8585 / CBS 2359 / DSM 70799 / NBRC 1267 / NRRL Y-1140 / WM37) (Yeast), this protein is Dimethyladenosine transferase (DIM1).